A 298-amino-acid chain; its full sequence is uncharacterized protein (298 aa).

The active site involves Asp119.

Belongs to the pseudouridine synthase RluA family.

The catalysed reaction is a uridine in RNA = a pseudouridine in RNA. This is an uncharacterized protein from Helicobacter pylori (strain ATCC 700392 / 26695) (Campylobacter pylori).